A 323-amino-acid chain; its full sequence is Beta-ketoacyl-[acyl-carrier-protein] synthase III (323 aa).

Active-site residues include C113 and H250. Residues 251–255 (QANLR) are ACP-binding. Residue N280 is part of the active site.

This sequence belongs to the thiolase-like superfamily. FabH family. Homodimer.

Its subcellular location is the cytoplasm. The enzyme catalyses malonyl-[ACP] + acetyl-CoA + H(+) = 3-oxobutanoyl-[ACP] + CO2 + CoA. It functions in the pathway lipid metabolism; fatty acid biosynthesis. Catalyzes the condensation reaction of fatty acid synthesis by the addition to an acyl acceptor of two carbons from malonyl-ACP. Catalyzes the first condensation reaction which initiates fatty acid synthesis and may therefore play a role in governing the total rate of fatty acid production. Possesses both acetoacetyl-ACP synthase and acetyl transacylase activities. Its substrate specificity determines the biosynthesis of branched-chain and/or straight-chain of fatty acids. This is Beta-ketoacyl-[acyl-carrier-protein] synthase III from Paracoccus denitrificans (strain Pd 1222).